The primary structure comprises 486 residues: ATP synthase subunit beta (486 aa).

164–171 (GGAGVGKT) provides a ligand contact to ATP.

This sequence belongs to the ATPase alpha/beta chains family. In terms of assembly, F-type ATPases have 2 components, CF(1) - the catalytic core - and CF(0) - the membrane proton channel. CF(1) has five subunits: alpha(3), beta(3), gamma(1), delta(1), epsilon(1). CF(0) has four main subunits: a(1), b(1), b'(1) and c(9-12).

The protein resides in the cellular thylakoid membrane. It carries out the reaction ATP + H2O + 4 H(+)(in) = ADP + phosphate + 5 H(+)(out). Produces ATP from ADP in the presence of a proton gradient across the membrane. The catalytic sites are hosted primarily by the beta subunits. This Prochlorococcus marinus (strain MIT 9215) protein is ATP synthase subunit beta.